The chain runs to 499 residues: Protein singed wings 2 (499 aa).

The N-terminal stretch at 1 to 29 is a signal peptide; that stretch reads MPSGVFQKRPKAAETISLFCMILIRLSRA. 2 LRR repeats span residues 154–175 and 178–199; these read ELHT…TFKR and PLKV…LLLP. An LRRCT 1 domain is found at 210–265; sequence NPWNCTRNFKWLLLQPEKGRLVVDRDELICTDRKYKERQMLMVMHYKLELKRQCQS. LRR repeat units lie at residues 307-328, 332-353, and 357-378; these read NTTT…RDNP, HVVD…EDTY, and NFRL…ALDN. The LRRCT 2 domain maps to 394–449; it reads NPWHCTCKFGSRMRELLTKYKDIVRDAWNVSCTYRLDDDQLLAKVLTLSRQEMCNL.

Its function is as follows. Has a role in the ecdysone induced cascade; probably indirect control of 'late' ecdysone genes. The polypeptide is Protein singed wings 2 (Drosophila melanogaster (Fruit fly)).